Consider the following 1480-residue polypeptide: Tubulin-specific chaperone D (1480 aa).

Disordered stretches follow at residues 1 to 32 (MENS…SQQQ) and 453 to 476 (NNNN…EEIP). Low complexity-rich tracts occupy residues 7–32 (ISLN…SQQQ) and 453–463 (NNNNNNNNNEN). Acidic residues predominate over residues 464 to 476 (NNEEGEEEEEEIP). Residues 482–520 (ILEEIMKSLKDKDTIIRWTSAKAIGRIVNLLPKDMGDQV) form an HEAT 1 repeat. A disordered region spans residues 859 to 880 (KPIITPPSSKSTTNNNNNNNNN). The stretch at 886–922 (EIAFNIILGYLNENLNHPNEEVQKEASKAFELLFSKY) is one HEAT 2 repeat. A disordered region spans residues 1437 to 1480 (NPHKQSDDNNNNNNGELINNNTENNNNNNFDDNLPEDSQDLMEI). A compositionally biased stretch (low complexity) spans 1444-1468 (DNNNNNNGELINNNTENNNNNNFDD). A compositionally biased stretch (acidic residues) spans 1469–1480 (NLPEDSQDLMEI).

It belongs to the TBCD family. In terms of assembly, supercomplex made of cofactors A to E. Cofactors A and D function by capturing and stabilizing tubulin in a quasi-native conformation. Cofactor E binds to the cofactor D-tubulin complex; interaction with cofactor C then causes the release of tubulin polypeptides that are committed to the native state.

Functionally, tubulin-folding protein; involved in the first step of the tubulin folding pathway. The chain is Tubulin-specific chaperone D (tbcd) from Dictyostelium discoideum (Social amoeba).